The following is a 333-amino-acid chain: Adenosine deaminase (333 aa).

His12 and His14 together coordinate Zn(2+). His14, Asp16, and Gly170 together coordinate substrate. His197 is a Zn(2+) binding site. Catalysis depends on Glu200, which acts as the Proton donor. Asp278 is a Zn(2+) binding site. Residue Asp279 coordinates substrate.

Belongs to the metallo-dependent hydrolases superfamily. Adenosine and AMP deaminases family. Adenosine deaminase subfamily. Zn(2+) is required as a cofactor.

It catalyses the reaction adenosine + H2O + H(+) = inosine + NH4(+). The catalysed reaction is 2'-deoxyadenosine + H2O + H(+) = 2'-deoxyinosine + NH4(+). Catalyzes the hydrolytic deamination of adenosine and 2-deoxyadenosine. In Salmonella enteritidis PT4 (strain P125109), this protein is Adenosine deaminase.